We begin with the raw amino-acid sequence, 772 residues long: Probable adenosine deaminase (772 aa).

Zn(2+) is bound by residues His-22 and His-24. Residues His-24, Asp-26, and Gly-180 each contribute to the substrate site. His-207 contributes to the Zn(2+) binding site. The active-site Proton donor is Glu-210. Asp-288 contributes to the Zn(2+) binding site.

The protein belongs to the metallo-dependent hydrolases superfamily. Adenosine and AMP deaminases family. The cofactor is Zn(2+).

It catalyses the reaction adenosine + H2O + H(+) = inosine + NH4(+). Functionally, catalyzes the hydrolytic deamination of adenosine. Plays an important role in purine metabolism and in adenosine homeostasis, and may thereby contribute to cellular signaling events. The chain is Probable adenosine deaminase (ada) from Dictyostelium discoideum (Social amoeba).